A 266-amino-acid chain; its full sequence is Ribosomal RNA small subunit methyltransferase A (266 aa).

S-adenosyl-L-methionine contacts are provided by Asn13, Leu15, Gly40, Glu61, Asp86, and Asn110.

The protein belongs to the class I-like SAM-binding methyltransferase superfamily. rRNA adenine N(6)-methyltransferase family. RsmA subfamily.

It is found in the cytoplasm. The enzyme catalyses adenosine(1518)/adenosine(1519) in 16S rRNA + 4 S-adenosyl-L-methionine = N(6)-dimethyladenosine(1518)/N(6)-dimethyladenosine(1519) in 16S rRNA + 4 S-adenosyl-L-homocysteine + 4 H(+). Its function is as follows. Specifically dimethylates two adjacent adenosines (A1518 and A1519) in the loop of a conserved hairpin near the 3'-end of 16S rRNA in the 30S particle. May play a critical role in biogenesis of 30S subunits. The polypeptide is Ribosomal RNA small subunit methyltransferase A (Hydrogenovibrio crunogenus (strain DSM 25203 / XCL-2) (Thiomicrospira crunogena)).